The following is a 604-amino-acid chain: MMDLELPPPGLQSQQDMDLIDILWRQDIDLGVSREVFDFSQRQKDYELEKQKKLEKERQEQLQKEQEKAFFAQLQLDEETGEFLPIQPAQHIQTDTSGSVSYSQVAHIPKQDALYFEDCMQLLAETFPFVDDHEVSSPTFQSLALDIPSHVESSVFTTPDQAQSLDSSLETAMTDLSSIQQDMEQVWQELFSIPELQCLNTENKQQAETTTVPSPEATLTEMDSNYHFYSSIPSLEKEVDSCSPHFLHGFEDSFSSILSTDDASQLNSLDSNPTLNTDFGDEFYSAFLAEPSGGGSMPSSAAISQSLSELLGGPIEGCDLSLCKAFNQKHTEGTVEFNDSDSGISLNTSPSRASPEHSVESSIYGDPPPGFSDSEMEELDSAPGSVKQNGPKAQPTHSSGDTVQPLSPAQGHSAAVHESQCENTTKKEVPVSPGHQKVPFTKDKHSSRLEAHLTRDELRAKALHIPFPVEKIINLPVDDFNEMMSKEQFNEAQLALIRDIRRRGKNKVAAQNCRKRKLENIVELEQDLGHLKDEREKLLREKGENDRNLHLLKRKLSTLYLEVFSMLRDEDGKPYSPSEYSLQQTRDGNVFLVPKSKKPDTKKN.

A DLG motif motif is present at residues 29–31 (DLG). A Phosphoserine; by PKC modification is found at S40. The short motif at 79–82 (ETGE) is the ETGE motif element. Phosphoserine is present on S214. The segment at 334–447 (TVEFNDSDSG…VPFTKDKHSS (114 aa)) is disordered. Polar residues-rich tracts occupy residues 340 to 352 (SDSG…SPSR) and 395 to 407 (PTHS…QPLS). N-linked (Glc) (glycation) lysine glycosylation is found at K461, K471, and K486. Positions 496-559 (LIRDIRRRGK…HLLKRKLSTL (64 aa)) constitute a bZIP domain. Residue R498 is glycosylated (N-linked (Glc) (glycation) arginine). The interval 498–517 (RDIRRRGKNKVAAQNCRKRK) is basic motif. A leucine-zipper region spans residues 521 to 528 (IVELEQDL). R568 carries an N-linked (Glc) (glycation) arginine glycan. Positions 570-604 (EDGKPYSPSEYSLQQTRDGNVFLVPKSKKPDTKKN) are disordered. The N-linked (Glc) (glycation) lysine glycan is linked to K573. A compositionally biased stretch (polar residues) spans 578–587 (SEYSLQQTRD). Residues 590 to 595 (VFLVPK) are mediates interaction with CHD6 and is necessary to activate transcription. N6-acetyllysine; by CREBBP is present on residues K595 and K598.

The protein belongs to the bZIP family. CNC subfamily. In terms of assembly, heterodimer; heterodimerizes with small Maf proteins. Interacts (via the bZIP domain) with MAFG and MAFK; required for binding to antioxidant response elements (AREs) on DNA. Interacts with KEAP1; the interaction is direct and promotes ubiquitination by the BCR(KEAP1) E3 ubiquitin ligase complex. Forms a ternary complex with PGAM5 and KEAP1. Interacts with EEF1D at heat shock promoter elements (HSE). Interacts via its leucine-zipper domain with the coiled-coil domain of PMF1. Interacts with CHD6; involved in activation of the transcription. Interacts with ESRRB; represses NFE2L2 transcriptional activity. Interacts with MOTS-c, a peptide produced by the mitochondrially encoded 12S rRNA MT-RNR1; the interaction occurs in the nucleus following metabolic stress. Ubiquitinated in the cytoplasm by the BCR(KEAP1) E3 ubiquitin ligase complex leading to its degradation. In response to oxidative stress, electrophile metabolites, such as sulforaphane, modify KEAP1, leading to inhibit activity of the BCR(KEAP1) complex, promoting NFE2L2/NRF2 nuclear accumulation and activity. In response to autophagy, the BCR(KEAP1) complex is inactivated. Post-translationally, phosphorylated by EIF2AK3/PERK following unfolded protein response (UPR), promoting dissociation from its cytoplasmic inhibitor KEAP1, followed by its translocation into the nucleus. Phosphorylation of Ser-40 by PKC in response to oxidative stress dissociates NFE2L2 from its cytoplasmic inhibitor KEAP1, promoting its translocation into the nucleus. In terms of processing, acetylation at Lys-595 and Lys-598 increases nuclear localization whereas deacetylation by SIRT1 enhances cytoplasmic presence. Glycation impairs transcription factor activity by preventing heterodimerization with small Maf proteins. Deglycation by FN3K restores activity.

It localises to the cytoplasm. The protein resides in the cytosol. The protein localises to the nucleus. Its function is as follows. Transcription factor that plays a key role in the response to oxidative stress: binds to antioxidant response (ARE) elements present in the promoter region of many cytoprotective genes, such as phase 2 detoxifying enzymes, and promotes their expression, thereby neutralizing reactive electrophiles. In normal conditions, ubiquitinated and degraded in the cytoplasm by the BCR(KEAP1) complex. In response to oxidative stress, electrophile metabolites inhibit activity of the BCR(KEAP1) complex, promoting nuclear accumulation of NFE2L2/NRF2, heterodimerization with one of the small Maf proteins and binding to ARE elements of cytoprotective target genes. The NFE2L2/NRF2 pathway is also activated in response to selective autophagy: autophagy promotes interaction between KEAP1 and SQSTM1/p62 and subsequent inactivation of the BCR(KEAP1) complex, leading to NFE2L2/NRF2 nuclear accumulation and expression of cytoprotective genes. The NFE2L2/NRF2 pathway is also activated during the unfolded protein response (UPR), contributing to redox homeostasis and cell survival following endoplasmic reticulum stress. May also be involved in the transcriptional activation of genes of the beta-globin cluster by mediating enhancer activity of hypersensitive site 2 of the beta-globin locus control region. Also plays an important role in the regulation of the innate immune response. It is a critical regulator of the innate immune response and survival during sepsis by maintaining redox homeostasis and restraint of the dysregulation of pro-inflammatory signaling pathways like MyD88-dependent and -independent and TNF-alpha signaling. Suppresses macrophage inflammatory response by blocking pro-inflammatory cytokine transcription and the induction of IL6. Binds to the proximity of pro-inflammatory genes in macrophages and inhibits RNA Pol II recruitment. The inhibition is independent of the Nrf2-binding motif and reactive oxygen species level. Represses antiviral cytosolic DNA sensing by suppressing the expression of the adapter protein STING1 and decreasing responsiveness to STING1 agonists while increasing susceptibility to infection with DNA viruses. The sequence is that of Nuclear factor erythroid 2-related factor 2 from Rattus norvegicus (Rat).